We begin with the raw amino-acid sequence, 181 residues long: Insulin-like growth factor 2 (181 aa).

The first 24 residues, 1 to 24 (MGIPVGKSLLMLFTFLAFASCCIA), serve as a signal peptide directing secretion. A b region spans residues 25-52 (AYRPSETLCGGELVDTLQFVCGDRGFYF). Intrachain disulfides connect Cys-33-Cys-71, Cys-45-Cys-84, and Cys-70-Cys-75. The c stretch occupies residues 53–64 (SRPASRINRRSR). Residues 65–85 (GIVEECCFRSCDLALLETYCA) form an a region. Residues 86–91 (TPAKSE) form a d region. A propeptide spans 92 to 181 (RDVSTPPTVL…AFVEVSSDLQ (90 aa)) (e peptide). An O-linked (GalNAc...) threonine glycan is attached at Thr-163.

It belongs to the insulin family. In terms of assembly, interacts with MYORG; this interaction is required for IGF2 secretion. Interacts with integrins ITGAV:ITGB3 and ITGA6:ITGB4; integrin-binding is required for IGF2 signaling. Interacts with IGFBP2. Post-translationally, proteolytically processed by PCSK4, proIGF2 is cleaved at Arg-128 and Arg-92 to generate big-IGF2 and mature IGF2.

The protein localises to the secreted. Its function is as follows. The insulin-like growth factors possess growth-promoting activity. Major fetal growth hormone in mammals. Plays a key role in regulating fetoplacental development. IGF2 is influenced by placental lactogen. Also involved in tissue differentiation. In adults, involved in glucose metabolism in adipose tissue, skeletal muscle and liver. Acts as a ligand for integrin which is required for IGF2 signaling. Positively regulates myogenic transcription factor MYOD1 function by facilitating the recruitment of transcriptional coactivators, thereby controlling muscle terminal differentiation. Inhibits myoblast differentiation and modulates metabolism via increasing the mitochondrial respiration rate. Functionally, preptin undergoes glucose-mediated co-secretion with insulin, and acts as a physiological amplifier of glucose-mediated insulin secretion. Exhibits osteogenic properties by increasing osteoblast mitogenic activity through phosphoactivation of MAPK1 and MAPK3. In Equus caballus (Horse), this protein is Insulin-like growth factor 2.